We begin with the raw amino-acid sequence, 260 residues long: Alpha- and beta-fibrinogenase OhS1 (260 aa).

A signal peptide spans 1–18 (MALIRVLASLLILQLSYA). A propeptide spanning residues 19-24 (VTPFDR) is cleaved from the precursor. In terms of domain architecture, Peptidase S1 spans 25–248 (IIGGFECNEY…YIDWIEGIIA (224 aa)). 6 cysteine pairs are disulfide-bonded: C31–C163, C50–C66, C98–C255, C142–C209, C174–C188, and C199–C224. N44 carries N-linked (GlcNAc...) asparagine glycosylation. The Charge relay system role is filled by H65. N-linked (GlcNAc...) asparagine glycosylation occurs at N79. The active-site Charge relay system is D110. Residues N117 and N121 are each glycosylated (N-linked (GlcNAc...) asparagine). S203 functions as the Charge relay system in the catalytic mechanism. N-linked (GlcNAc...) asparagine glycosylation occurs at N250.

It belongs to the peptidase S1 family. Snake venom subfamily. In terms of assembly, monomer. In terms of tissue distribution, expressed by the venom gland.

It localises to the secreted. Its activity is regulated as follows. Completely inhibited by NPGB, PMSF, diisopropylfluorophosphate (DFP), benzamidine and soybean trypsin inhibitor. Not inhibited by EDTA. Its function is as follows. Snake venom serine protease that possesses potent fibrinogenolytic (on both alpha- (FGA) and beta-chains (FGB)) and amidolytic activities. Selectively cleaves Arg-|-Xaa or Lys-|-Xaa bonds. This Ophiophagus hannah (King cobra) protein is Alpha- and beta-fibrinogenase OhS1.